The sequence spans 574 residues: Protein misato (574 aa).

Belongs to the misato family.

Its subcellular location is the mitochondrion. This chain is Protein misato (mst), found in Drosophila melanogaster (Fruit fly).